We begin with the raw amino-acid sequence, 213 residues long: Phosphatidylserine decarboxylase proenzyme (213 aa).

The active-site Schiff-base intermediate with substrate; via pyruvic acid is the Ser-182. Ser-182 is modified (pyruvic acid (Ser); by autocatalysis).

It belongs to the phosphatidylserine decarboxylase family. PSD-A subfamily. As to quaternary structure, heterodimer of a large membrane-associated beta subunit and a small pyruvoyl-containing alpha subunit. It depends on pyruvate as a cofactor. Is synthesized initially as an inactive proenzyme. Formation of the active enzyme involves a self-maturation process in which the active site pyruvoyl group is generated from an internal serine residue via an autocatalytic post-translational modification. Two non-identical subunits are generated from the proenzyme in this reaction, and the pyruvate is formed at the N-terminus of the alpha chain, which is derived from the carboxyl end of the proenzyme. The post-translation cleavage follows an unusual pathway, termed non-hydrolytic serinolysis, in which the side chain hydroxyl group of the serine supplies its oxygen atom to form the C-terminus of the beta chain, while the remainder of the serine residue undergoes an oxidative deamination to produce ammonia and the pyruvoyl prosthetic group on the alpha chain.

It localises to the cell membrane. The catalysed reaction is a 1,2-diacyl-sn-glycero-3-phospho-L-serine + H(+) = a 1,2-diacyl-sn-glycero-3-phosphoethanolamine + CO2. Its pathway is phospholipid metabolism; phosphatidylethanolamine biosynthesis; phosphatidylethanolamine from CDP-diacylglycerol: step 2/2. Its function is as follows. Catalyzes the formation of phosphatidylethanolamine (PtdEtn) from phosphatidylserine (PtdSer). This chain is Phosphatidylserine decarboxylase proenzyme, found in Geotalea daltonii (strain DSM 22248 / JCM 15807 / FRC-32) (Geobacter daltonii).